The primary structure comprises 525 residues: Ribonuclease Y (525 aa).

A helical transmembrane segment spans residues 3-23 (IFFISLVLIVLASVVFFVGGF). The 86-residue stretch at 215-300 (ALSVVHIQSD…KAYEDAKKEI (86 aa)) folds into the KH domain. The HD domain occupies 341–433 (LLQHSREVAM…VDAANVISLS (93 aa)).

The protein belongs to the RNase Y family.

It localises to the cell membrane. In terms of biological role, endoribonuclease that initiates mRNA decay. This Chlorobium phaeobacteroides (strain DSM 266 / SMG 266 / 2430) protein is Ribonuclease Y.